We begin with the raw amino-acid sequence, 480 residues long: ATP synthase subunit beta (480 aa).

153–160 (GGAGVGKT) is a binding site for ATP.

Belongs to the ATPase alpha/beta chains family. As to quaternary structure, F-type ATPases have 2 components, CF(1) - the catalytic core - and CF(0) - the membrane proton channel. CF(1) has five subunits: alpha(3), beta(3), gamma(1), delta(1), epsilon(1). CF(0) has three main subunits: a(1), b(2) and c(9-12). The alpha and beta chains form an alternating ring which encloses part of the gamma chain. CF(1) is attached to CF(0) by a central stalk formed by the gamma and epsilon chains, while a peripheral stalk is formed by the delta and b chains.

It localises to the cell membrane. It catalyses the reaction ATP + H2O + 4 H(+)(in) = ADP + phosphate + 5 H(+)(out). Its function is as follows. Produces ATP from ADP in the presence of a proton gradient across the membrane. The catalytic sites are hosted primarily by the beta subunits. This chain is ATP synthase subunit beta, found in Lactobacillus gasseri (strain ATCC 33323 / DSM 20243 / BCRC 14619 / CIP 102991 / JCM 1131 / KCTC 3163 / NCIMB 11718 / NCTC 13722 / AM63).